Here is a 114-residue protein sequence, read N- to C-terminus: FK506-binding protein 1 (114 aa).

The region spanning 26–114 is the PPIase FKBP-type domain; it reads GDLVTIHYTG…IFDVELLKVN (89 aa).

Belongs to the FKBP-type PPIase family. FKBP1 subfamily.

It localises to the cytoplasm. It catalyses the reaction [protein]-peptidylproline (omega=180) = [protein]-peptidylproline (omega=0). Its activity is regulated as follows. Inhibited by both FK506 and rapamycin. Its function is as follows. PPIases accelerate the folding of proteins. It catalyzes the cis-trans isomerization of proline imidic peptide bonds in oligopeptides. The polypeptide is FK506-binding protein 1 (FPR1) (Candida glabrata (strain ATCC 2001 / BCRC 20586 / JCM 3761 / NBRC 0622 / NRRL Y-65 / CBS 138) (Yeast)).